A 156-amino-acid chain; its full sequence is Crossover junction endodeoxyribonuclease RuvC (156 aa).

Active-site residues include D7, E66, and D138. Mg(2+) is bound by residues D7, E66, and D138.

The protein belongs to the RuvC family. In terms of assembly, homodimer which binds Holliday junction (HJ) DNA. The HJ becomes 2-fold symmetrical on binding to RuvC with unstacked arms; it has a different conformation from HJ DNA in complex with RuvA. In the full resolvosome a probable DNA-RuvA(4)-RuvB(12)-RuvC(2) complex forms which resolves the HJ. Requires Mg(2+) as cofactor.

It is found in the cytoplasm. It carries out the reaction Endonucleolytic cleavage at a junction such as a reciprocal single-stranded crossover between two homologous DNA duplexes (Holliday junction).. In terms of biological role, the RuvA-RuvB-RuvC complex processes Holliday junction (HJ) DNA during genetic recombination and DNA repair. Endonuclease that resolves HJ intermediates. Cleaves cruciform DNA by making single-stranded nicks across the HJ at symmetrical positions within the homologous arms, yielding a 5'-phosphate and a 3'-hydroxyl group; requires a central core of homology in the junction. The consensus cleavage sequence is 5'-(A/T)TT(C/G)-3'. Cleavage occurs on the 3'-side of the TT dinucleotide at the point of strand exchange. HJ branch migration catalyzed by RuvA-RuvB allows RuvC to scan DNA until it finds its consensus sequence, where it cleaves and resolves the cruciform DNA. The sequence is that of Crossover junction endodeoxyribonuclease RuvC from Ehrlichia canis (strain Jake).